A 290-amino-acid chain; its full sequence is UPF0761 membrane protein YihY (290 aa).

A run of 6 helical transmembrane segments spans residues 44–64 (LLSL…FPMF), 104–124 (VGAC…DSAL), 140–160 (FAVY…SLAI), 183–203 (ILPL…VPTT), 210–230 (ALVG…GFAL), and 244–264 (VLAV…IVLL).

The protein belongs to the UPF0761 family.

The protein localises to the cell inner membrane. The sequence is that of UPF0761 membrane protein YihY from Salmonella paratyphi B (strain ATCC BAA-1250 / SPB7).